Reading from the N-terminus, the 151-residue chain is UPF0178 protein Swoo_1444 (151 aa).

Belongs to the UPF0178 family.

The polypeptide is UPF0178 protein Swoo_1444 (Shewanella woodyi (strain ATCC 51908 / MS32)).